A 241-amino-acid chain; its full sequence is ATP synthase subunit a (241 aa).

Transmembrane regions (helical) follow at residues 29–49, 54–74, 86–106, 114–134, 153–173, 177–197, 200–220, and 221–241; these read NSSFFTMISVILMILFLLFGI, VIPGYLQAAVEYVYDFVISII, IPLIFTVFIFILSCNLVGVLP, HVIVTFALSMVVFIYITIVGF, WLAPIIIIIKLFAYLVRPVSL, LAANMIAGHTIIKVIAGFIVN, IFFTPAPFLFIIALIGFEVFV, and AILQAYIFTILTCVYLSDAVK.

Belongs to the ATPase A chain family. In terms of assembly, F-type ATPases have 2 components, CF(1) - the catalytic core - and CF(0) - the membrane proton channel. CF(1) has five subunits: alpha(3), beta(3), gamma(1), delta(1), epsilon(1). CF(0) has three main subunits: a(1), b(2) and c(9-12). The alpha and beta chains form an alternating ring which encloses part of the gamma chain. CF(1) is attached to CF(0) by a central stalk formed by the gamma and epsilon chains, while a peripheral stalk is formed by the delta and b chains.

The protein resides in the cell membrane. In terms of biological role, key component of the proton channel; it plays a direct role in the translocation of protons across the membrane. This is ATP synthase subunit a from Wolbachia pipientis wMel.